The chain runs to 558 residues: Putative ABC transporter ATP-binding protein gbs1680 (558 aa).

2 consecutive ABC transporter domains span residues 5-246 (IEWK…GIRE) and 295-527 (LSVQ…THLK). Residues 39–46 (GPSGSGKS) and 328–335 (GKNGAGKS) each bind ATP.

This sequence belongs to the ABC transporter superfamily.

It is found in the cell membrane. Probably part of an ABC transporter complex. Responsible for energy coupling to the transport system. This Streptococcus agalactiae serotype III (strain NEM316) protein is Putative ABC transporter ATP-binding protein gbs1680.